Reading from the N-terminus, the 446-residue chain is Methylenetetrahydrofolate--tRNA-(uracil-5-)-methyltransferase TrmFO (446 aa).

8 to 13 (GAGLAG) lines the FAD pocket.

Belongs to the MnmG family. TrmFO subfamily. The cofactor is FAD.

Its subcellular location is the cytoplasm. The catalysed reaction is uridine(54) in tRNA + (6R)-5,10-methylene-5,6,7,8-tetrahydrofolate + NADH + H(+) = 5-methyluridine(54) in tRNA + (6S)-5,6,7,8-tetrahydrofolate + NAD(+). It catalyses the reaction uridine(54) in tRNA + (6R)-5,10-methylene-5,6,7,8-tetrahydrofolate + NADPH + H(+) = 5-methyluridine(54) in tRNA + (6S)-5,6,7,8-tetrahydrofolate + NADP(+). Functionally, catalyzes the folate-dependent formation of 5-methyl-uridine at position 54 (M-5-U54) in all tRNAs. This is Methylenetetrahydrofolate--tRNA-(uracil-5-)-methyltransferase TrmFO from Paracoccus denitrificans (strain Pd 1222).